Here is a 497-residue protein sequence, read N- to C-terminus: Actin-binding protein WASF2 (497 aa).

Disordered regions lie at residues 173-203 (KEKR…KEEW) and 239-436 (ENVD…SDAR). Over residues 252 to 263 (SDSASSPSPSFS) the composition is skewed to low complexity. 2 stretches are compositionally biased toward pro residues: residues 298-335 (SHPP…PPLP) and 343-403 (GTPP…PPLP). One can recognise a WH2 domain in the interval 435-452 (ARSDLLSAIRQGFQLRRV). Phosphoserine is present on serine 473.

Belongs to the SCAR/WAVE family. Binds actin and the Arp2/3 complex. Interacts with BAIAP2. Component of the WAVE2 complex composed of ABI1, CYFIP1/SRA1, NCKAP1/NAP1 (NCKAP1l/HEM1 in hematopoietic cells) and WASF2/WAVE2. Directly interacts with BRK1. Interacts with human cytomegalovirus protein UL135. Interacts with FNBP1L (via the SH3 domain).

It is found in the cytoplasm. Its subcellular location is the cytoskeleton. It localises to the cell projection. The protein resides in the lamellipodium. The protein localises to the basolateral cell membrane. In terms of biological role, downstream effector molecule involved in the transmission of signals from tyrosine kinase receptors and small GTPases to the actin cytoskeleton. Promotes formation of actin filaments. Part of the WAVE complex that regulates lamellipodia formation. The WAVE complex regulates actin filament reorganization via its interaction with the Arp2/3 complex. This chain is Actin-binding protein WASF2, found in Mus musculus (Mouse).